A 418-amino-acid chain; its full sequence is AP-3 complex subunit mu-1 (418 aa).

The MHD domain maps to 176–417 (NNEAYFDVIE…ITKAGKFQVR (242 aa)).

This sequence belongs to the adaptor complexes medium subunit family. As to quaternary structure, the AP-3 complex associates with the BLOC-1 complex.

Its subcellular location is the golgi apparatus. The protein localises to the cytoplasmic vesicle membrane. Functionally, part of the AP-3 complex, an adaptor-related complex which is not clathrin-associated. The complex is associated with the Golgi region as well as more peripheral structures. It facilitates the budding of vesicles from the Golgi membrane and may be directly involved in trafficking to lysosomes. In concert with the BLOC-1 complex, AP-3 is required to target cargos into vesicles assembled at cell bodies for delivery into neurites and nerve terminals. This is AP-3 complex subunit mu-1 (AP3M1) from Gallus gallus (Chicken).